Here is a 124-residue protein sequence, read N- to C-terminus: Holo-[acyl-carrier-protein] synthase (124 aa).

2 residues coordinate Mg(2+): aspartate 8 and glutamate 56.

This sequence belongs to the P-Pant transferase superfamily. AcpS family. It depends on Mg(2+) as a cofactor.

The protein localises to the cytoplasm. The enzyme catalyses apo-[ACP] + CoA = holo-[ACP] + adenosine 3',5'-bisphosphate + H(+). In terms of biological role, transfers the 4'-phosphopantetheine moiety from coenzyme A to a Ser of acyl-carrier-protein. This is Holo-[acyl-carrier-protein] synthase from Maridesulfovibrio salexigens (strain ATCC 14822 / DSM 2638 / NCIMB 8403 / VKM B-1763) (Desulfovibrio salexigens).